The primary structure comprises 150 residues: Ribosome-binding factor A (150 aa).

Residues 119–150 (VAERAKSAQPAGEPDPYRFDGAAAADDDEPAT) form a disordered region.

Belongs to the RbfA family. As to quaternary structure, monomer. Binds 30S ribosomal subunits, but not 50S ribosomal subunits or 70S ribosomes.

Its subcellular location is the cytoplasm. In terms of biological role, one of several proteins that assist in the late maturation steps of the functional core of the 30S ribosomal subunit. Associates with free 30S ribosomal subunits (but not with 30S subunits that are part of 70S ribosomes or polysomes). Required for efficient processing of 16S rRNA. May interact with the 5'-terminal helix region of 16S rRNA. The chain is Ribosome-binding factor A from Acidothermus cellulolyticus (strain ATCC 43068 / DSM 8971 / 11B).